The chain runs to 248 residues: Probable transcriptional regulatory protein FTL_0929 (248 aa).

Belongs to the TACO1 family.

It is found in the cytoplasm. This Francisella tularensis subsp. holarctica (strain LVS) protein is Probable transcriptional regulatory protein FTL_0929.